A 208-amino-acid polypeptide reads, in one-letter code: Methylthioribulose-1-phosphate dehydratase (208 aa).

The Zn(2+) site is built by histidine 96 and histidine 98.

It belongs to the aldolase class II family. MtnB subfamily. Zn(2+) is required as a cofactor.

The catalysed reaction is 5-(methylsulfanyl)-D-ribulose 1-phosphate = 5-methylsulfanyl-2,3-dioxopentyl phosphate + H2O. It functions in the pathway amino-acid biosynthesis; L-methionine biosynthesis via salvage pathway; L-methionine from S-methyl-5-thio-alpha-D-ribose 1-phosphate: step 2/6. Catalyzes the dehydration of methylthioribulose-1-phosphate (MTRu-1-P) into 2,3-diketo-5-methylthiopentyl-1-phosphate (DK-MTP-1-P). The protein is Methylthioribulose-1-phosphate dehydratase of Pseudomonas fluorescens (strain Pf0-1).